Here is a 380-residue protein sequence, read N- to C-terminus: Kappa-type opioid receptor (380 aa).

At Met-1–Ala-57 the chain is on the extracellular side. N-linked (GlcNAc...) asparagine glycosylation is found at Asn-25 and Asn-39. Residues Ile-58–Ile-85 form a helical membrane-spanning segment. Topologically, residues Arg-86–Asn-95 are cytoplasmic. The helical transmembrane segment at Ile-96 to Tyr-119 threads the bilayer. Residues Leu-120 to Lys-132 lie on the Extracellular side of the membrane. The cysteines at positions 131 and 210 are disulfide-linked. Residues Ile-133–Val-154 form a helical membrane-spanning segment. At Asp-155–Leu-173 the chain is on the cytoplasmic side. Residues Lys-174–Leu-196 form a helical membrane-spanning segment. Residues Gly-197–Trp-222 are Extracellular-facing. A helical transmembrane segment spans residues Asp-223 to Thr-247. Over Leu-248 to Lys-274 the chain is Cytoplasmic. The chain crosses the membrane as a helical span at residues Leu-275 to Val-296. Residues Glu-297–Ser-311 are Extracellular-facing. Residues Tyr-312 to Leu-333 traverse the membrane as a helical segment. The Cytoplasmic portion of the chain corresponds to Asp-334–Val-380. A lipid anchor (S-palmitoyl cysteine) is attached at Cys-345.

It belongs to the G-protein coupled receptor 1 family. As to quaternary structure, interacts with NHERF1. Interacts with GABARAPL1. As to expression, detected in brain (at protein level). Brain (neocortex, hippocampus, amygdala, medial habenula, hypothalamus, locus ceruleus, and parabrachial nucleus).

The protein resides in the cell membrane. Functionally, G-protein coupled opioid receptor that functions as a receptor for endogenous alpha-neoendorphins and dynorphins, but has low affinity for beta-endorphins. Also functions as a receptor for various synthetic opioids and for the psychoactive diterpene salvinorin A. Ligand binding causes a conformation change that triggers signaling via guanine nucleotide-binding proteins (G proteins) and modulates the activity of down-stream effectors, such as adenylate cyclase. Signaling leads to the inhibition of adenylate cyclase activity. Inhibits neurotransmitter release by reducing calcium ion currents and increasing potassium ion conductance. Plays a role in the perception of pain. Plays a role in mediating reduced physical activity upon treatment with synthetic opioids. Plays a role in the regulation of salivation in response to synthetic opioids. May play a role in arousal and regulation of autonomic and neuroendocrine functions. The protein is Kappa-type opioid receptor (Oprk1) of Mus musculus (Mouse).